A 487-amino-acid chain; its full sequence is Glutamate--tRNA ligase (487 aa).

The 'HIGH' region signature appears at 12–22; it reads PSPTGYMHVGN. The short motif at 249–253 is the 'KMSKS' region element; it reads KLSKR. K252 contacts ATP.

This sequence belongs to the class-I aminoacyl-tRNA synthetase family. Glutamate--tRNA ligase type 1 subfamily. Monomer.

The protein localises to the cytoplasm. The catalysed reaction is tRNA(Glu) + L-glutamate + ATP = L-glutamyl-tRNA(Glu) + AMP + diphosphate. In terms of biological role, catalyzes the attachment of glutamate to tRNA(Glu) in a two-step reaction: glutamate is first activated by ATP to form Glu-AMP and then transferred to the acceptor end of tRNA(Glu). This Clostridium novyi (strain NT) protein is Glutamate--tRNA ligase.